The following is a 90-amino-acid chain: Probable Fe(2+)-trafficking protein (90 aa).

The protein belongs to the Fe(2+)-trafficking protein family.

Could be a mediator in iron transactions between iron acquisition and iron-requiring processes, such as synthesis and/or repair of Fe-S clusters in biosynthetic enzymes. In Paracidovorax citrulli (strain AAC00-1) (Acidovorax citrulli), this protein is Probable Fe(2+)-trafficking protein.